Reading from the N-terminus, the 352-residue chain is Protein MGF 360-9L (352 aa).

It belongs to the asfivirus MGF 360 family. In terms of assembly, interacts with host STAT1; this interaction mediates STAT1 degradation through apoptosis. Interacts with host STAT2; this interaction mediates STAT2 degradation through the proteasome.

The protein resides in the host cytoplasm. Functionally, plays a role in virus cell tropism, and may be required for efficient virus replication in macrophages. The chain is Protein MGF 360-9L from Ornithodoros (relapsing fever ticks).